A 480-amino-acid chain; its full sequence is Adenosylhomocysteinase (480 aa).

Substrate contacts are provided by Thr-63, Asp-142, and Glu-203. 204 to 206 (TTT) is an NAD(+) binding site. 2 residues coordinate substrate: Lys-233 and Asp-237. NAD(+)-binding positions include Asn-238, 267–272 (GYGDVG), Glu-290, Asn-325, 346–348 (IGH), and Asn-394.

Belongs to the adenosylhomocysteinase family. The cofactor is NAD(+).

It is found in the cytoplasm. The enzyme catalyses S-adenosyl-L-homocysteine + H2O = L-homocysteine + adenosine. The protein operates within amino-acid biosynthesis; L-homocysteine biosynthesis; L-homocysteine from S-adenosyl-L-homocysteine: step 1/1. Its function is as follows. May play a key role in the regulation of the intracellular concentration of adenosylhomocysteine. In Xylella fastidiosa (strain Temecula1 / ATCC 700964), this protein is Adenosylhomocysteinase.